Consider the following 297-residue polypeptide: Acetaldehyde dehydrogenase (297 aa).

Residue Thr-18–Ile-21 coordinates NAD(+). Cys-133 acts as the Acyl-thioester intermediate in catalysis. NAD(+) contacts are provided by residues Ser-165–Asn-173 and Asn-275.

The protein belongs to the acetaldehyde dehydrogenase family.

The enzyme catalyses acetaldehyde + NAD(+) + CoA = acetyl-CoA + NADH + H(+). This chain is Acetaldehyde dehydrogenase, found in Spirochaeta aurantia.